A 453-amino-acid polypeptide reads, in one-letter code: tRNA modification GTPase MnmE (453 aa).

3 residues coordinate (6S)-5-formyl-5,6,7,8-tetrahydrofolate: Arg-22, Glu-79, and Lys-119. Residues 215-376 (GMKVVIAGRP…LKQHLKSLMG (162 aa)) form the TrmE-type G domain. Asn-225 provides a ligand contact to K(+). GTP is bound by residues 225–230 (NAGKSS), 244–250 (TEIAGTT), 269–272 (DTAG), and 334–337 (NKAD). Position 229 (Ser-229) interacts with Mg(2+). Residues Thr-244, Ile-246, and Thr-249 each coordinate K(+). Mg(2+) is bound at residue Thr-250. Residue Lys-453 participates in (6S)-5-formyl-5,6,7,8-tetrahydrofolate binding.

The protein belongs to the TRAFAC class TrmE-Era-EngA-EngB-Septin-like GTPase superfamily. TrmE GTPase family. In terms of assembly, homodimer. Heterotetramer of two MnmE and two MnmG subunits. K(+) is required as a cofactor.

The protein resides in the cytoplasm. Exhibits a very high intrinsic GTPase hydrolysis rate. Involved in the addition of a carboxymethylaminomethyl (cmnm) group at the wobble position (U34) of certain tRNAs, forming tRNA-cmnm(5)s(2)U34. This is tRNA modification GTPase MnmE from Shewanella denitrificans (strain OS217 / ATCC BAA-1090 / DSM 15013).